A 219-amino-acid chain; its full sequence is uncharacterized protein (219 aa).

A Phosphoserine modification is found at Ser23. A Glycyl lysine isopeptide (Lys-Gly) (interchain with G-Cter in SUMO) cross-link involves residue Lys137.

The protein resides in the cytoplasm. This is an uncharacterized protein from Saccharomyces cerevisiae (strain ATCC 204508 / S288c) (Baker's yeast).